Here is a 265-residue protein sequence, read N- to C-terminus: Hydroxyethylthiazole kinase (265 aa).

M50 contributes to the substrate binding site. 2 residues coordinate ATP: R125 and T171. G198 serves as a coordination point for substrate.

It belongs to the Thz kinase family. It depends on Mg(2+) as a cofactor.

It catalyses the reaction 5-(2-hydroxyethyl)-4-methylthiazole + ATP = 4-methyl-5-(2-phosphooxyethyl)-thiazole + ADP + H(+). Its pathway is cofactor biosynthesis; thiamine diphosphate biosynthesis; 4-methyl-5-(2-phosphoethyl)-thiazole from 5-(2-hydroxyethyl)-4-methylthiazole: step 1/1. Catalyzes the phosphorylation of the hydroxyl group of 4-methyl-5-beta-hydroxyethylthiazole (THZ). The chain is Hydroxyethylthiazole kinase from Salmonella arizonae (strain ATCC BAA-731 / CDC346-86 / RSK2980).